A 123-amino-acid chain; its full sequence is MRIQSLLLLGALLAVGSQLPAVFGRKKGEKWGGCPADDGPCLLSVPDQCVEDSQCPLTRKCCYRACFRQCVPRVSVKPGSCPQDQLRCLSPMNHLCHKDSDCSGKKRCCHSACGRDCRDPARG.

A signal peptide spans 1–24 (MRIQSLLLLGALLAVGSQLPAVFG). WAP domains lie at 27 to 73 (KGEK…CVPR) and 74 to 121 (VSVK…RDPA). Disulfide bonds link Cys34-Cys62, Cys41-Cys66, Cys49-Cys61, Cys55-Cys70, Cys81-Cys109, Cys88-Cys113, Cys96-Cys108, and Cys102-Cys117.

The protein resides in the secreted. In terms of biological role, putative acid-stable proteinase inhibitor. In Papio anubis (Olive baboon), this protein is WAP four-disulfide core domain protein 5 (WFDC5).